A 359-amino-acid polypeptide reads, in one-letter code: 4-galactosyl-N-acetylglucosaminide 3-alpha-L-fucosyltransferase FUT6 (359 aa).

At methionine 1–arginine 14 the chain is on the cytoplasmic side. The helical; Signal-anchor for type II membrane protein transmembrane segment at cysteine 15–leucine 34 threads the bilayer. The Lumenal segment spans residues arginine 35–threonine 359. N-linked (GlcNAc...) asparagine glycans are attached at residues asparagine 46, asparagine 91, asparagine 153, and asparagine 184. The tract at residues lysine 73 to valine 112 is determines site-specific fucosylation.

It belongs to the glycosyltransferase 10 family. As to quaternary structure, homodimer and monomer. Monomer (secreted form). Post-translationally, N-glycosylated. Proteolytic cleavage releases a secreted glycoform of 43 kDa.

It is found in the golgi apparatus. The protein resides in the golgi stack membrane. Its subcellular location is the secreted. The enzyme catalyses a beta-D-galactosyl-(1-&gt;4)-N-acetyl-beta-D-glucosaminyl derivative + GDP-beta-L-fucose = a beta-D-galactosyl-(1-&gt;4)-[alpha-L-fucosyl-(1-&gt;3)]-N-acetyl-beta-D-glucosaminyl derivative + GDP + H(+). It carries out the reaction an N-acetyl-alpha-neuraminyl-(2-&gt;3)-beta-D-galactosyl-(1-&gt;4)-N-acetyl-beta-D-glucosaminyl derivative + GDP-beta-L-fucose = an alpha-Neu5Ac-(2-&gt;3)-beta-D-Gal-(1-&gt;4)-[alpha-L-Fuc-(1-&gt;3)]-beta-D-GlcNAc derivative + GDP + H(+). The catalysed reaction is an alpha-Neu5Ac-(2-&gt;3)-beta-D-Gal-(1-&gt;4)-beta-D-GlcNAc-(1-&gt;3)-beta-D-Gal-(1-&gt;4)-[alpha-L-Fuc-(1-&gt;3)]-beta-D-GlcNAc derivative + GDP-beta-L-fucose = an alpha-Neu5Ac-(2-&gt;3)-beta-D-Gal-(1-&gt;4)-[alpha-L-Fuc-(1-&gt;3)]-beta-D-GlcNAc-(1-&gt;3)-beta-D-Gal-(1-&gt;4)-[alpha-L-Fuc-(1-&gt;3)]-beta-D-GlcNAc derivative + GDP + H(+). It catalyses the reaction a neolactoside nLc6Cer + GDP-beta-L-fucose = beta-D-Gal-(1-&gt;4)-[alpha-L-Fuc-(1-&gt;3)]-beta-D-GlcNAc-(1-&gt;3)-beta-D-Gal-(1-&gt;4)-beta-D-GlcNAc-(1-&gt;3)-beta-D-Gal-(1-&gt;4)-beta-D-Glc-(1&lt;-&gt;1')-Cer + GDP + H(+). The enzyme catalyses a neolactoside nLc6Cer + GDP-beta-L-fucose = beta-D-galactosyl-(1-&gt;4)-N-acetyl-beta-D-glucosaminyl-(1-&gt;3)-beta-D-galactosyl-(1-&gt;4)-[alpha-L-fucosyl-(1-&gt;3)]-N-acetyl-beta-D-glucosaminyl-(1-&gt;3)-beta-D-galactosyl-(1-&gt;4)-beta-D-glucosyl-(1&lt;-&gt;1')-ceramide + GDP + H(+). It carries out the reaction a neolactoside VI(3)-alpha-NeuNAc-nLc6Cer + GDP-beta-L-fucose = a neolactoside VI(3)-alpha-NeuAc,V(3)-alphaFuc-nLc6Cer + GDP + H(+). The catalysed reaction is beta-D-galactosyl-(1-&gt;4)-N-acetyl-D-glucosamine + GDP-beta-L-fucose = beta-D-galactosyl-(1-&gt;4)-[alpha-L-fucosyl-(1-&gt;3)]-N-acetyl-D-glucosamine + GDP + H(+). It catalyses the reaction N-acetyl-alpha-neuraminosyl-(2-&gt;3)-beta-D-galactosyl-(1-&gt;4)-N-acetyl-beta-D-glucosamine + GDP-beta-L-fucose = N-acetyl-alpha-neuraminosyl-(2-&gt;3)-beta-D-galactosyl-(1-&gt;4)-[alpha-L-fucosyl-(1-&gt;3)]-N-acetyl-beta-D-glucosamine + GDP + H(+). The enzyme catalyses lactose + GDP-beta-L-fucose = beta-D-galactosyl-(1-&gt;4)-[alpha-L-fucosyl-(1-&gt;3)]-D-glucose + GDP + H(+). It carries out the reaction alpha-L-Fuc-(1-&gt;2)-beta-D-Gal-(1-&gt;4)-D-Glc + GDP-beta-L-fucose = alpha-L-Fuc-(1-&gt;2)-beta-D-Gal-(1-&gt;4)-[alpha-L-Fuc-(1-&gt;3)]-D-Glc + GDP + H(+). The catalysed reaction is a beta-D-galactosyl-(1-&gt;4)-N-acetyl-beta-D-6-sulfooxy-glucosaminyl derivative + GDP-beta-L-fucose = a beta-D-galactosyl-(1-&gt;4)-[alpha-L-fucosyl-(1-&gt;3)]-N-acetyl-beta-D-6-sulfooxy-glucosaminyl derivative + GDP + H(+). Its pathway is protein modification; protein glycosylation. Its function is as follows. Catalyzes the transfer of L-fucose, from a guanosine diphosphate-beta-L-fucose, to the N-acetyl glucosamine (GlcNAc) of a distal alpha2,3 sialylated lactosamine unit of a glycoprotein- or glycolipid-linked sialopolylactosamines chain or of a distal or internal lactosamine unit of a neutral glycoprotein- or glycolipid-linked polylactosamines chain through an alpha-1,3 glycosidic linkage and participates in surface expression of the sialyl Lewis X (sLe(x)), Lewis X (Le(x)) and non sialylated VIM2 determinants. Moreover transfers fucose to H-type 2 (Fucalpha1-2Galbeta1-4GlcNAc) chain acceptor substrates and participates in difucosylated sialyl Lewis x determinants. Also fucosylates a polylactosamine substrate having a 6 sulfate modification at the GlcNAc moiety and gives rise to sialyl and non-sialyl 6-sulfo lewis X. Does not have activity towards type 1 ((Galbeta1-3GlcNAc)) and H-type 1 chain (Fucalpha1-2Galbeta1-3GlcNAc) acceptors substrates. The chain is 4-galactosyl-N-acetylglucosaminide 3-alpha-L-fucosyltransferase FUT6 from Gorilla gorilla gorilla (Western lowland gorilla).